The following is a 323-amino-acid chain: ATP synthase gamma chain (323 aa).

This sequence belongs to the ATPase gamma chain family. F-type ATPases have 2 components, CF(1) - the catalytic core - and CF(0) - the membrane proton channel. CF(1) has five subunits: alpha(3), beta(3), gamma(1), delta(1), epsilon(1). CF(0) has three main subunits: a, b and c.

Its subcellular location is the cell membrane. In terms of biological role, produces ATP from ADP in the presence of a proton gradient across the membrane. The gamma chain is believed to be important in regulating ATPase activity and the flow of protons through the CF(0) complex. The sequence is that of ATP synthase gamma chain from Nocardia farcinica (strain IFM 10152).